Here is a 346-residue protein sequence, read N- to C-terminus: Phosphate acyltransferase (346 aa).

The protein belongs to the PlsX family. Homodimer. Probably interacts with PlsY.

The protein resides in the cytoplasm. It carries out the reaction a fatty acyl-[ACP] + phosphate = an acyl phosphate + holo-[ACP]. The protein operates within lipid metabolism; phospholipid metabolism. Functionally, catalyzes the reversible formation of acyl-phosphate (acyl-PO(4)) from acyl-[acyl-carrier-protein] (acyl-ACP). This enzyme utilizes acyl-ACP as fatty acyl donor, but not acyl-CoA. In Delftia acidovorans (strain DSM 14801 / SPH-1), this protein is Phosphate acyltransferase.